The primary structure comprises 878 residues: Probable outer membrane protein PmpI (878 aa).

An N-terminal signal peptide occupies residues 1 to 24; it reads MRPDHMNFCCLCAAILSSTAVLFG. The segment covering 360 to 371 has biased composition (low complexity); it reads SSKESPLPSSLQ. The interval 360–381 is disordered; that stretch reads SSKESPLPSSLQASVTSPTPAT. Residues 372–381 show a composition bias toward polar residues; that stretch reads ASVTSPTPAT. The region spanning 602-878 is the Autotransporter domain; the sequence is GGAYLFGTWG…SLDLGTTYRF (277 aa).

This sequence belongs to the PMP outer membrane protein family.

The protein localises to the secreted. Its subcellular location is the cell wall. It localises to the cell outer membrane. This Chlamydia trachomatis serovar D (strain ATCC VR-885 / DSM 19411 / UW-3/Cx) protein is Probable outer membrane protein PmpI (pmpI).